The chain runs to 165 residues: Urease accessory protein UreE (165 aa).

The disordered stretch occupies residues Glu137–His156.

This sequence belongs to the UreE family.

Its subcellular location is the cytoplasm. Involved in urease metallocenter assembly. Binds nickel. Probably functions as a nickel donor during metallocenter assembly. The protein is Urease accessory protein UreE of Pseudomonas putida (strain GB-1).